The chain runs to 236 residues: Potassium/proton antiporter CemA (236 aa).

4 consecutive transmembrane segments (helical) span residues Tyr-18–Leu-38, Ile-114–Ala-134, Leu-161–Ile-181, and Phe-196–Ile-216.

Belongs to the CemA family.

It localises to the plastid. The protein resides in the chloroplast inner membrane. It carries out the reaction K(+)(in) + H(+)(out) = K(+)(out) + H(+)(in). Functionally, contributes to K(+)/H(+) antiport activity by supporting proton efflux to control proton extrusion and homeostasis in chloroplasts in a light-dependent manner to modulate photosynthesis. Prevents excessive induction of non-photochemical quenching (NPQ) under continuous-light conditions. Indirectly promotes efficient inorganic carbon uptake into chloroplasts. This chain is Potassium/proton antiporter CemA, found in Mesostigma viride (Green alga).